We begin with the raw amino-acid sequence, 105 residues long: Nucleoid-associated protein ABC0038 (105 aa).

The span at M1–K22 shows a compositional bias: low complexity. The disordered stretch occupies residues M1–E26.

The protein belongs to the YbaB/EbfC family. As to quaternary structure, homodimer.

The protein resides in the cytoplasm. It localises to the nucleoid. In terms of biological role, binds to DNA and alters its conformation. May be involved in regulation of gene expression, nucleoid organization and DNA protection. The chain is Nucleoid-associated protein ABC0038 from Shouchella clausii (strain KSM-K16) (Alkalihalobacillus clausii).